Reading from the N-terminus, the 56-residue chain is MRSVLVLACLAAASASAISDGMYGTMVFTKDMMVNLDMKMKELCIMKLLNHILQPT.

Belongs to the hemocyanin family. In terms of tissue distribution, expressed in fat body and ovary.

Its subcellular location is the secreted. Larval storage protein (LSP) which may serve as a store of amino acids for synthesis of adult proteins. The biosynthesis, accumulation and sequestration of storage protein-1 takes place during metamorphosis and saves energy for the non-feeding pupal stage. May also be essential for egg formation. The protein is Sex-specific storage protein 1 of Amsacta albistriga (Red hairy caterpillar).